Consider the following 341-residue polypeptide: S-adenosylmethionine:tRNA ribosyltransferase-isomerase (341 aa).

It belongs to the QueA family. In terms of assembly, monomer.

Its subcellular location is the cytoplasm. The catalysed reaction is 7-aminomethyl-7-carbaguanosine(34) in tRNA + S-adenosyl-L-methionine = epoxyqueuosine(34) in tRNA + adenine + L-methionine + 2 H(+). It functions in the pathway tRNA modification; tRNA-queuosine biosynthesis. Its function is as follows. Transfers and isomerizes the ribose moiety from AdoMet to the 7-aminomethyl group of 7-deazaguanine (preQ1-tRNA) to give epoxyqueuosine (oQ-tRNA). The polypeptide is S-adenosylmethionine:tRNA ribosyltransferase-isomerase (Caldanaerobacter subterraneus subsp. tengcongensis (strain DSM 15242 / JCM 11007 / NBRC 100824 / MB4) (Thermoanaerobacter tengcongensis)).